The sequence spans 451 residues: TERF1-interacting nuclear factor 2 (451 aa).

A2 is modified (N-acetylalanine). A disordered region spans residues 229 to 257 (NPLPKAKPGTHLPQGPSSRTHPEPLAGRH). Residues 256 to 278 (RHFNLAPLGRRRVQSQWASTRGG) carry the TBM motif. Positions 262 to 268 (PLGRRRV) match the Nuclear localization signal motif. Residue S295 is modified to Phosphoserine. Glycyl lysine isopeptide (Lys-Gly) (interchain with G-Cter in SUMO2) cross-links involve residues K302, K306, K341, and K353.

In terms of assembly, monomer. Found in a complex with POT1; TERF1 and TNKS1. Component of the shelterin complex (telosome) composed of TERF1, TERF2, TINF2, TERF2IP ACD and POT1. Interacts with TERF1, TERF2 and ACD. In terms of tissue distribution, detected in heart, brain, placenta, lung, liver, skeletal muscle, kidney and pancreas.

It is found in the nucleus. The protein localises to the chromosome. The protein resides in the telomere. Its subcellular location is the nucleus matrix. Component of the shelterin complex (telosome) that is involved in the regulation of telomere length and protection. Shelterin associates with arrays of double-stranded TTAGGG repeats added by telomerase and protects chromosome ends; without its protective activity, telomeres are no longer hidden from the DNA damage surveillance and chromosome ends are inappropriately processed by DNA repair pathways. Plays a role in shelterin complex assembly. Isoform 1 may have additional role in tethering telomeres to the nuclear matrix. The sequence is that of TERF1-interacting nuclear factor 2 (TINF2) from Homo sapiens (Human).